Reading from the N-terminus, the 218-residue chain is Thiopurine S-methyltransferase (218 aa).

Residues W10, L45, E66, and R123 each contribute to the S-adenosyl-L-methionine site.

It belongs to the class I-like SAM-binding methyltransferase superfamily. TPMT family.

It is found in the cytoplasm. It carries out the reaction S-adenosyl-L-methionine + a thiopurine = S-adenosyl-L-homocysteine + a thiopurine S-methylether.. The chain is Thiopurine S-methyltransferase from Pseudomonas fluorescens (strain SBW25).